A 95-amino-acid polypeptide reads, in one-letter code: Secretoglobin family 2A member 2 (95 aa).

Positions 1–18 are cleaved as a signal peptide; the sequence is MKLVFLFLLVTIPICCYA. A glycan (N-linked (GlcNAc...) asparagine) is linked at asparagine 35.

The protein belongs to the secretoglobin family. Lipophilin subfamily. In terms of assembly, prostatein is composed of three different peptides called C1, C2 and C3. These form covalent C1:C3 (F) and C2:C3 (S) heterodimers whose non-covalent association forms tetrameric (C1:C3/C3:C2) prostatein molecules. Highly expressed in ventral prostate.

It localises to the secreted. In terms of biological role, part of prostatein which is the major secretory glycoprotein of ventral prostate gland. Steroid-binding protein; can bind non-polar steroids, cholesterol and a group of small proline-rich peptides. This is Secretoglobin family 2A member 2 (Scgb2a2) from Rattus norvegicus (Rat).